Here is a 69-residue protein sequence, read N- to C-terminus: Protein transport protein Sec61 subunit gamma (69 aa).

At 1–40 (MDILEETAAPLKDFAKNSIRLFKKCTKPDAQEFQKIALAT) the chain is on the cytoplasmic side. A helical membrane pass occupies residues 41 to 61 (LIGFAIMGFIGFFVKLIHIPI). Over 62 to 69 (NNILVGGV) the chain is Extracellular.

It belongs to the SecE/SEC61-gamma family. In terms of assembly, heterotrimeric complex composed of SEC61-alpha, SEC61-beta and SEC61-gamma.

It is found in the endoplasmic reticulum membrane. Functionally, necessary for protein translocation in the endoplasmic reticulum. This is Protein transport protein Sec61 subunit gamma (sec61g) from Dictyostelium discoideum (Social amoeba).